The following is a 173-amino-acid chain: MKTKEIVDDVTMKRAITRITYEIIERNKQLDNVVLAGIKTRGVFLARRIQERLHQLEGLDLPIGELDIKPFRDDMRVEEDTTLMSVDITGKDVILIDDVLYTGRTIRAAIDNLVSLGRPARVSLAVLVDRGHRELPIRADYVGKNIPTSSVEEIVVEVVEVDGRDRVSIIDPT.

A PRPP-binding motif is present at residues 93–105; that stretch reads VILIDDVLYTGRT.

It belongs to the purine/pyrimidine phosphoribosyltransferase family. PyrR subfamily. In terms of assembly, homodimer and homohexamer; in equilibrium.

It catalyses the reaction UMP + diphosphate = 5-phospho-alpha-D-ribose 1-diphosphate + uracil. Functionally, regulates transcriptional attenuation of the pyrimidine nucleotide (pyr) operon by binding in a uridine-dependent manner to specific sites on pyr mRNA. This disrupts an antiterminator hairpin in the RNA and favors formation of a downstream transcription terminator, leading to a reduced expression of downstream genes. In terms of biological role, also displays a weak uracil phosphoribosyltransferase activity which is not physiologically significant. This chain is Bifunctional protein PyrR, found in Streptococcus pyogenes serotype M12 (strain MGAS2096).